Reading from the N-terminus, the 365-residue chain is Leu/Ile/Val/Thr-binding protein (365 aa).

The first 21 residues, 1 to 21 (MKGKTLLAGCIALSLSHMAFA), serve as a signal peptide directing secretion. An intrachain disulfide couples Cys-74 to Cys-99.

It belongs to the leucine-binding protein family.

Its subcellular location is the periplasm. Functionally, this protein is a component of the leucine, isoleucine, valine, threonine transport system, which is one of the two periplasmic binding protein-dependent transport systems of the high-affinity transport of the branched-chain amino acids. The chain is Leu/Ile/Val/Thr-binding protein (livJ) from Salmonella typhimurium (strain LT2 / SGSC1412 / ATCC 700720).